Reading from the N-terminus, the 211-residue chain is 5,6-dimethylbenzimidazole synthase (211 aa).

Residues 22–26, S50, L99, and S158 contribute to the FMN site; that span reads RRDVR.

It belongs to the BluB family. As to quaternary structure, homooctamer.

The enzyme catalyses FMNH2 + O2 = dialurate + 5,6-dimethylbenzimidazole + D-erythrose 4-phosphate + H(+). Involved in the biosynthesis of cobalamin (vitamin B12). Catalyzes the oxidative fragmentation and contraction of the isoalloxazine heterocycle and the cleavage of the ribityl tail of FMNH(2) to form 5,6-dimethylbenzimidazole (DMB) and D-erythrose 4-phosphate (E4P). NAD(P)H is only required initially to reduce FMN and oxygen drives the oxidative fragmentation. In Rhodospirillum rubrum (strain ATCC 11170 / ATH 1.1.1 / DSM 467 / LMG 4362 / NCIMB 8255 / S1), this protein is 5,6-dimethylbenzimidazole synthase.